The following is a 116-amino-acid chain: MEEYHRPCDEVGFNADEAHNIVKECIDGVLGGEDYNQNNINQWTASIVEQSLAHLVKLGKAYKYIVTCAVVQRSPYGFHTASSCFWDTTSDGTCTVRWENRTMNCIVNVFAIAIVL.

Tyrosine 4 bears the 3'-nitrotyrosine mark.

Belongs to the dynein light chain Tctex-type family. As to quaternary structure, homodimer. The cytoplasmic dynein 1 complex consists of two catalytic heavy chains (HCs) and a number of non-catalytic subunits presented by intermediate chains (ICs), light intermediate chains (LICs) and light chains (LCs); the composition seems to vary in respect to the IC, LIC and LC composition. The heavy chain homodimer serves as a scaffold for the probable homodimeric assembly of the respective non-catalytic subunits. The ICs and LICs bind directly to the HC dimer and the LCs assemble on the IC dimer. DYNLT1 and DYNLT3 compete for association with dynein IC (DYNC1I1 or DYNC1I2). Self-associates. Interacts with DYNC1I1 and DYNC1I2. Interacts with BUB3. Interacts with SATB1 in nucleus to form complex with matrix attachment regions (MARs) of DNA.

The protein localises to the nucleus. It is found in the cytoplasm. The protein resides in the cytoskeleton. It localises to the chromosome. Its subcellular location is the centromere. The protein localises to the kinetochore. Acts as one of several non-catalytic accessory components of the cytoplasmic dynein 1 complex that are thought to be involved in linking dynein to cargos and to adapter proteins that regulate dynein function. Cytoplasmic dynein 1 acts as a motor for the intracellular retrograde motility of vesicles and organelles along microtubules. Probably binds BUB3 as part of transport cargo. Required for the efficient progression through mitosis. In Ovis aries (Sheep), this protein is Dynein light chain Tctex-type 3 (DYNLT3).